The chain runs to 261 residues: MAHQAHSYHMVDPSPWPIFGAAAALLTTSGLIMWFHYSSTTLLTMGLLSMLLVMLQWWRDVVRESTFQGHHTPTVQKGLRYGMILFITSEAFFFLGFFWAFFHSSLAPTPELGGQWPPTGVKPLNPLEVPLLNTAILLASGVTVTWAHHSITEGNRKQAIHALTLTILLGFYFTALQAMEYHEASFSIADSVYGSTFFVATGFHGLHVIIGSSFLTVCLLRLIKFHFTPNHHFGFEAAAWYWHFVDIIWLFLYMSMYWWGS.

Over 1-15 (MAHQAHSYHMVDPSP) the chain is Mitochondrial matrix. A helical transmembrane segment spans residues 16–34 (WPIFGAAAALLTTSGLIMW). Residues 35-40 (FHYSST) are Mitochondrial intermembrane-facing. A helical transmembrane segment spans residues 41–66 (TLLTMGLLSMLLVMLQWWRDVVREST). The Mitochondrial matrix portion of the chain corresponds to 67 to 72 (FQGHHT). The helical transmembrane segment at 73–105 (PTVQKGLRYGMILFITSEAFFFLGFFWAFFHSS) threads the bilayer. The Mitochondrial intermembrane portion of the chain corresponds to 106-128 (LAPTPELGGQWPPTGVKPLNPLE). A helical transmembrane segment spans residues 129–152 (VPLLNTAILLASGVTVTWAHHSIT). The Mitochondrial matrix portion of the chain corresponds to 153-155 (EGN). A helical transmembrane segment spans residues 156-183 (RKQAIHALTLTILLGFYFTALQAMEYHE). The Mitochondrial intermembrane portion of the chain corresponds to 184–190 (ASFSIAD). A helical membrane pass occupies residues 191 to 223 (SVYGSTFFVATGFHGLHVIIGSSFLTVCLLRLI). At 224 to 232 (KFHFTPNHH) the chain is on the mitochondrial matrix side. A helical membrane pass occupies residues 233-256 (FGFEAAAWYWHFVDIIWLFLYMSM). At 257-261 (YWWGS) the chain is on the mitochondrial intermembrane side.

It belongs to the cytochrome c oxidase subunit 3 family. Component of the cytochrome c oxidase (complex IV, CIV), a multisubunit enzyme composed of 14 subunits. The complex is composed of a catalytic core of 3 subunits MT-CO1, MT-CO2 and MT-CO3, encoded in the mitochondrial DNA, and 11 supernumerary subunits COX4I, COX5A, COX5B, COX6A, COX6B, COX6C, COX7A, COX7B, COX7C, COX8 and NDUFA4, which are encoded in the nuclear genome. The complex exists as a monomer or a dimer and forms supercomplexes (SCs) in the inner mitochondrial membrane with NADH-ubiquinone oxidoreductase (complex I, CI) and ubiquinol-cytochrome c oxidoreductase (cytochrome b-c1 complex, complex III, CIII), resulting in different assemblies (supercomplex SCI(1)III(2)IV(1) and megacomplex MCI(2)III(2)IV(2)).

It localises to the mitochondrion inner membrane. It catalyses the reaction 4 Fe(II)-[cytochrome c] + O2 + 8 H(+)(in) = 4 Fe(III)-[cytochrome c] + 2 H2O + 4 H(+)(out). Functionally, component of the cytochrome c oxidase, the last enzyme in the mitochondrial electron transport chain which drives oxidative phosphorylation. The respiratory chain contains 3 multisubunit complexes succinate dehydrogenase (complex II, CII), ubiquinol-cytochrome c oxidoreductase (cytochrome b-c1 complex, complex III, CIII) and cytochrome c oxidase (complex IV, CIV), that cooperate to transfer electrons derived from NADH and succinate to molecular oxygen, creating an electrochemical gradient over the inner membrane that drives transmembrane transport and the ATP synthase. Cytochrome c oxidase is the component of the respiratory chain that catalyzes the reduction of oxygen to water. Electrons originating from reduced cytochrome c in the intermembrane space (IMS) are transferred via the dinuclear copper A center (CU(A)) of subunit 2 and heme A of subunit 1 to the active site in subunit 1, a binuclear center (BNC) formed by heme A3 and copper B (CU(B)). The BNC reduces molecular oxygen to 2 water molecules using 4 electrons from cytochrome c in the IMS and 4 protons from the mitochondrial matrix. The protein is Cytochrome c oxidase subunit 3 (MT-CO3) of Gallus gallus (Chicken).